Consider the following 163-residue polypeptide: Endoribonuclease YbeY (163 aa).

The Zn(2+) site is built by histidine 116, histidine 120, and histidine 126.

This sequence belongs to the endoribonuclease YbeY family. It depends on Zn(2+) as a cofactor.

Its subcellular location is the cytoplasm. Its function is as follows. Single strand-specific metallo-endoribonuclease involved in late-stage 70S ribosome quality control and in maturation of the 3' terminus of the 16S rRNA. This chain is Endoribonuclease YbeY, found in Idiomarina loihiensis (strain ATCC BAA-735 / DSM 15497 / L2-TR).